The primary structure comprises 475 residues: Cytosolic enolase 3 (475 aa).

Ser-2 is modified (N-acetylserine). Residues His-200 and Glu-209 each coordinate substrate. Asp-252 functions as the Proton donor in the catalytic mechanism. Asp-287, Glu-336, and Asp-361 together coordinate Mg(2+). Residues Glu-336 and Asp-361 each contribute to the substrate site. Lys-386 (proton acceptor) is an active-site residue. Substrate contacts are provided by residues 413-416 (SHRC) and Lys-437.

It belongs to the enolase family. As to quaternary structure, homodimer. Mg(2+) serves as cofactor.

The protein resides in the cytoplasm. The protein localises to the nucleus. It carries out the reaction (2R)-2-phosphoglycerate = phosphoenolpyruvate + H2O. The protein operates within carbohydrate degradation; glycolysis; pyruvate from D-glyceraldehyde 3-phosphate: step 4/5. The sequence is that of Cytosolic enolase 3 (ENO3) from Arabidopsis thaliana (Mouse-ear cress).